Consider the following 79-residue polypeptide: Exodeoxyribonuclease 7 small subunit (79 aa).

Belongs to the XseB family. In terms of assembly, heterooligomer composed of large and small subunits.

The protein resides in the cytoplasm. The catalysed reaction is Exonucleolytic cleavage in either 5'- to 3'- or 3'- to 5'-direction to yield nucleoside 5'-phosphates.. Functionally, bidirectionally degrades single-stranded DNA into large acid-insoluble oligonucleotides, which are then degraded further into small acid-soluble oligonucleotides. In Lactococcus lactis subsp. cremoris (strain SK11), this protein is Exodeoxyribonuclease 7 small subunit.